The following is a 118-amino-acid chain: Protein BEX4 (118 aa).

Residues 14–50 (VEKDKKNKKGGKASKQSEEESHHLEEVENKKPGGNVR) are disordered. The span at 28–44 (KQSEEESHHLEEVENKK) shows a compositional bias: basic and acidic residues. The interval 30–88 (SEEESHHLEEVENKKPGGNVRRKVRRLVPNFLWAIPNRHVDHSEGGEEVGRFVGQVMEA) is interaction with SIRT2. The segment at 30-118 (SEEESHHLEE…DNHYDFCLIP (89 aa)) is interaction with alpha-tubulin. C115 lines the Zn(2+) pocket.

The protein belongs to the BEX family. Interacts with alpha-tubulin. Interacts with SIRT2. In terms of processing, ubiquitinated and degraded by the proteasome.

It is found in the cytoplasm. The protein localises to the cytoskeleton. It localises to the spindle pole. Its subcellular location is the nucleus. Functionally, may play a role in microtubule deacetylation by negatively regulating the SIRT2 deacetylase activity toward alpha-tubulin and thereby participate in the control of cell cycle progression and genomic stability. In absence of reductive stress, acts as a pseudosubstrate for the CRL2(FEM1B) complex: associates with FEM1B via zinc, thereby preventing association between FEM1B and its substrates. The protein is Protein BEX4 of Rattus norvegicus (Rat).